The chain runs to 207 residues: Ribosomal RNA small subunit methyltransferase G (207 aa).

S-adenosyl-L-methionine contacts are provided by residues Gly-77, Phe-82, 100 to 102, and Arg-141; that span reads ERS.

Belongs to the methyltransferase superfamily. RNA methyltransferase RsmG family.

Its subcellular location is the cytoplasm. Functionally, specifically methylates the N7 position of a guanine in 16S rRNA. The chain is Ribosomal RNA small subunit methyltransferase G from Borrelia turicatae (strain 91E135).